An 81-amino-acid polypeptide reads, in one-letter code: Kappa-theraphotoxin-Gr2c (81 aa).

The N-terminal stretch at 1 to 19 (MKAFFVILGLALLCAYSFA) is a signal peptide. Residues 20–50 (LEEQDQLSLRNDLLTVMFAENSELTPETEER) constitute a propeptide that is removed on maturation. Intrachain disulfides connect Cys-52-Cys-66, Cys-59-Cys-71, and Cys-65-Cys-75.

This sequence belongs to the neurotoxin 30 (phrixotoxin) family. Expressed by the venom gland.

The protein resides in the secreted. Its function is as follows. Inhibits sodium channels Nav1.1/SCN1A (IC(50)=5.7 uM), Nav1.2/SCN2A (IC(50)=12 uM), Nav1.4/SCN4A (IC(50)=4 uM), Nav1.6/SCN8A (IC(50)=6.6 uM), Nav1.7/SCN9A (IC(50)=13.6-1030 nM), potassium channels Kv11.1/KCNH2 (IC(50)=4.7 uM), as well as high-voltage-gated calcium channels Cav1.2/CACNA1C (IC(50)= nM). Also blocks mechanosensitive ion channels (also named stretch-activated channels or SACs) and the hypotonic cell swelling induced calcium increase associated with the activation of such channels. It can thus be useful in treating cardiac ventricular disturbances. Also induces analgesia in mammals. In Grammostola rosea (Chilean rose tarantula), this protein is Kappa-theraphotoxin-Gr2c.